Here is a 546-residue protein sequence, read N- to C-terminus: Chaperonin GroEL (546 aa).

Residues 30–33, Lys51, 87–91, Gly415, 479–481, and Asp495 each bind ATP; these read TLGP, DGTTT, and NAA.

Belongs to the chaperonin (HSP60) family. As to quaternary structure, forms a cylinder of 14 subunits composed of two heptameric rings stacked back-to-back. Interacts with the co-chaperonin GroES.

It is found in the cytoplasm. The enzyme catalyses ATP + H2O + a folded polypeptide = ADP + phosphate + an unfolded polypeptide.. Functionally, together with its co-chaperonin GroES, plays an essential role in assisting protein folding. The GroEL-GroES system forms a nano-cage that allows encapsulation of the non-native substrate proteins and provides a physical environment optimized to promote and accelerate protein folding. In Xanthomonas campestris pv. phaseoli, this protein is Chaperonin GroEL.